Here is a 331-residue protein sequence, read N- to C-terminus: L-lactate dehydrogenase A chain (331 aa).

Residues 29–57 and Arg98 each bind NAD(+); that span reads GMVGMASAVSILLKDLCDELAMVDVMEDK. The substrate site is built by Arg105, Asn137, and Arg168. An NAD(+)-binding site is contributed by Asn137. His192 serves as the catalytic Proton acceptor. Thr247 contacts substrate.

This sequence belongs to the LDH/MDH superfamily. LDH family. Homotetramer.

The protein resides in the cytoplasm. The catalysed reaction is (S)-lactate + NAD(+) = pyruvate + NADH + H(+). Its pathway is fermentation; pyruvate fermentation to lactate; (S)-lactate from pyruvate: step 1/1. Interconverts simultaneously and stereospecifically pyruvate and lactate with concomitant interconversion of NADH and NAD(+). The chain is L-lactate dehydrogenase A chain (ldha) from Notothenia neglecta (Yellowbelly rockcod).